Reading from the N-terminus, the 494-residue chain is Guanosine-5'-triphosphate,3'-diphosphate pyrophosphatase (494 aa).

The protein belongs to the GppA/Ppx family. GppA subfamily.

It catalyses the reaction guanosine 3'-diphosphate 5'-triphosphate + H2O = guanosine 3',5'-bis(diphosphate) + phosphate + H(+). It functions in the pathway purine metabolism; ppGpp biosynthesis; ppGpp from GTP: step 2/2. Functionally, catalyzes the conversion of pppGpp to ppGpp. Guanosine pentaphosphate (pppGpp) is a cytoplasmic signaling molecule which together with ppGpp controls the 'stringent response', an adaptive process that allows bacteria to respond to amino acid starvation, resulting in the coordinated regulation of numerous cellular activities. In Escherichia coli O139:H28 (strain E24377A / ETEC), this protein is Guanosine-5'-triphosphate,3'-diphosphate pyrophosphatase.